The following is a 435-amino-acid chain: 3-phosphoshikimate 1-carboxyvinyltransferase (435 aa).

Positions 22, 23, and 27 each coordinate 3-phosphoshikimate. Lysine 22 contributes to the phosphoenolpyruvate binding site. Residues glycine 95 and arginine 123 each contribute to the phosphoenolpyruvate site. The 3-phosphoshikimate site is built by serine 168, glutamine 170, aspartate 319, and lysine 346. Glutamine 170 contributes to the phosphoenolpyruvate binding site. Residue aspartate 319 is the Proton acceptor of the active site. The phosphoenolpyruvate site is built by arginine 350 and arginine 393.

The protein belongs to the EPSP synthase family. As to quaternary structure, monomer.

The protein resides in the cytoplasm. The catalysed reaction is 3-phosphoshikimate + phosphoenolpyruvate = 5-O-(1-carboxyvinyl)-3-phosphoshikimate + phosphate. It functions in the pathway metabolic intermediate biosynthesis; chorismate biosynthesis; chorismate from D-erythrose 4-phosphate and phosphoenolpyruvate: step 6/7. In terms of biological role, catalyzes the transfer of the enolpyruvyl moiety of phosphoenolpyruvate (PEP) to the 5-hydroxyl of shikimate-3-phosphate (S3P) to produce enolpyruvyl shikimate-3-phosphate and inorganic phosphate. This is 3-phosphoshikimate 1-carboxyvinyltransferase from Chloroflexus aggregans (strain MD-66 / DSM 9485).